Consider the following 245-residue polypeptide: Phosphoadenosine 5'-phosphosulfate reductase (245 aa).

The Nucleophile; cysteine thiosulfonate intermediate role is filled by cysteine 239.

It belongs to the PAPS reductase family. CysH subfamily.

It is found in the cytoplasm. The catalysed reaction is [thioredoxin]-disulfide + sulfite + adenosine 3',5'-bisphosphate + 2 H(+) = [thioredoxin]-dithiol + 3'-phosphoadenylyl sulfate. The protein operates within sulfur metabolism; hydrogen sulfide biosynthesis; sulfite from sulfate: step 3/3. Functionally, catalyzes the formation of sulfite from phosphoadenosine 5'-phosphosulfate (PAPS) using thioredoxin as an electron donor. This chain is Phosphoadenosine 5'-phosphosulfate reductase, found in Alkalilimnicola ehrlichii (strain ATCC BAA-1101 / DSM 17681 / MLHE-1).